Consider the following 434-residue polypeptide: Probable proline transporter 2 (434 aa).

The next 11 helical transmembrane spans lie at 26–46 (PWYQVGFVLTTGVNSAYVLGY), 49–69 (SVMVPLGWIGGTCGLILAAAI), 106–126 (LTWALQYVNLFMINTGFIILA), 149–169 (IALSGFVCALFAFGIPYLSAL), 171–191 (IWLGFSTFFSLIYITIAFVLS), 213–233 (IFTTIGAVANLVFAYNTGMLP), 251–271 (LWFQFTVGSLPLYAVTFMGYW), 297–317 (LSAFLQTVIALHIFASPMYEF), 339–359 (VGVRGGYLTVNTLVAAMLPFL), 362–382 (FMSLTGALSTFPLTFVLANHM), and 403–423 (VAGFSLLSIAAAVAALRLIMV).

Belongs to the amino acid/polyamine transporter 2 family. Amino acid/auxin permease (AAAP) (TC 2.A.18.3) subfamily.

Its subcellular location is the cell membrane. Its function is as follows. Proline transporter that mediates proline transport across the plasma membrane. The chain is Probable proline transporter 2 from Oryza sativa subsp. japonica (Rice).